The sequence spans 163 residues: Allophycocyanin alpha-B chain (163 aa).

Asn71 bears the N4-methylasparagine mark. Cys81 lines the (2R,3E)-phycocyanobilin pocket.

It belongs to the phycobiliprotein family. Post-translationally, contains one covalently linked bilin chromophore.

The protein localises to the plastid. The protein resides in the chloroplast thylakoid membrane. In terms of biological role, allophycocyanin is a photosynthetic bile pigment-protein complex with maximum absorption at approximately 650 nanometers. The chain is Allophycocyanin alpha-B chain (apcD) from Cyanidium caldarium (Red alga).